We begin with the raw amino-acid sequence, 370 residues long: Dihydroorotate dehydrogenase (370 aa).

Substrate is bound by residues Lys82, 135-139 (NSFGM), and Asn200. 82–83 (KT) is an FMN binding site. FMN is bound at residue Asn200. Cys203 (nucleophile) is an active-site residue. Residues Lys241 and Ile269 each contribute to the FMN site. 270–271 (NT) contacts substrate. FMN is bound by residues Gly297, 328-329 (GG), and 350-351 (AT).

It belongs to the dihydroorotate dehydrogenase family. FMN is required as a cofactor.

It catalyses the reaction (S)-dihydroorotate + A = orotate + AH2. It functions in the pathway pyrimidine metabolism; UMP biosynthesis via de novo pathway. Its function is as follows. Catalyzes the conversion of dihydroorotate to orotate. Participates in the pyrimidine biosynthetic pathway. This chain is Dihydroorotate dehydrogenase (pyr4), found in Dictyostelium discoideum (Social amoeba).